A 400-amino-acid polypeptide reads, in one-letter code: Ribosomal RNA large subunit methyltransferase I (400 aa).

Residues 6–84 form the PUA domain; the sequence is FPRLVLAKGR…NEAIDSAFFE (79 aa).

This sequence belongs to the methyltransferase superfamily. RlmI family.

It is found in the cytoplasm. It carries out the reaction cytidine(1962) in 23S rRNA + S-adenosyl-L-methionine = 5-methylcytidine(1962) in 23S rRNA + S-adenosyl-L-homocysteine + H(+). Its function is as follows. Specifically methylates the cytosine at position 1962 (m5C1962) of 23S rRNA. The chain is Ribosomal RNA large subunit methyltransferase I from Klebsiella pneumoniae (strain 342).